The primary structure comprises 248 residues: 5'-nucleotidase SurE (248 aa).

Residues Asp-8, Asp-9, Ser-39, and Asn-91 each contribute to the a divalent metal cation site.

It belongs to the SurE nucleotidase family. A divalent metal cation is required as a cofactor.

Its subcellular location is the cytoplasm. The catalysed reaction is a ribonucleoside 5'-phosphate + H2O = a ribonucleoside + phosphate. Functionally, nucleotidase that shows phosphatase activity on nucleoside 5'-monophosphates. This Geobacter sp. (strain M21) protein is 5'-nucleotidase SurE.